A 727-amino-acid chain; its full sequence is Kinesin-like protein KIN-14G (727 aa).

3 disordered regions span residues 100–156 (QTAP…LHLR), 172–194 (HLSA…SCSR), and 336–357 (LAGG…GATR). The span at 114 to 133 (VASSTAGRASRTKSASSTGR) shows a compositional bias: polar residues. The Kinesin motor domain occupies 381-710 (NIRVFCRVRP…LRFAARVNSC (330 aa)). Residue 461 to 468 (GQTGSGKT) coordinates ATP.

The protein belongs to the TRAFAC class myosin-kinesin ATPase superfamily. Kinesin family. KIN-14 subfamily.

The protein is Kinesin-like protein KIN-14G of Oryza sativa subsp. japonica (Rice).